We begin with the raw amino-acid sequence, 637 residues long: Sodium-dependent phosphate transport protein 2A (637 aa).

At 1–103 the chain is on the cytoplasmic side; the sequence is MMSYSERLGG…LAQVGTKLLK (103 aa). Phosphoserine is present on residues serine 14 and serine 34. The chain crosses the membrane as a helical span at residues 104 to 125; that stretch reads VPLMLGFLYLFVCSLDVLSSAF. The Extracellular segment spans residues 126-145; that stretch reads QLAGGKVAGDIFKDNAILSN. A helical transmembrane segment spans residues 146 to 163; it reads PVAGLVVGILVTVLVQSS. Residues 164-216 lie on the Cytoplasmic side of the membrane; that stretch reads STSTSIIVSMVSSGLLEVSSAIPIIMGSNIGTSVTNTIVALMQAGDRTDFRRA. The helical transmembrane segment at 217 to 236 threads the bilayer; sequence FAGATVHDCFNWLSVLVLLP. Intrachain disulfides connect cysteine 225–cysteine 520 and cysteine 306–cysteine 334. Residues 237–345 lie on the Extracellular side of the membrane; sequence LEAATGYLHH…HIFVDTGLPD (109 aa). N-linked (GlcNAc...) asparagine glycosylation is found at asparagine 298 and asparagine 328. Residues 346 to 368 form a helical membrane-spanning segment; that stretch reads LAVGLILLAGSLVVLCTCLILLV. The Cytoplasmic segment spans residues 369–410; it reads KMLNSLLKGQVANVIQKVINTDFPAPFTWVTGYFAMVVGASM. Residues 411–434 traverse the membrane as a helical segment; that stretch reads TFVVQSSSVFTSAITPLIGLGVIS. Residues 435–464 are Extracellular-facing; that stretch reads IERAYPLTLGSNIGTTTTAILAALASPREK. The helical transmembrane segment at 465-485 threads the bilayer; it reads LSSSFQIALCHFFFNISGILL. Residues 486–511 lie on the Cytoplasmic side of the membrane; it reads WYPLPCTRLPIRMAKALGKRTAKYRW. A Phosphothreonine; by PKC modification is found at threonine 506. The chain crosses the membrane as a helical span at residues 512 to 532; that stretch reads FAVLYLLVCFLLLPSLVFGIS. The Extracellular segment spans residues 533-537; that stretch reads MAGWQ. The helical transmembrane segment at 538-559 threads the bilayer; that stretch reads AMVGVGTPFGALLAFVVLVNVL. The Cytoplasmic portion of the chain corresponds to 560–637; that stretch reads QSRSPGHLPK…LPAHHNATRL (78 aa). Serine 605 bears the Phosphoserine mark. At threonine 621 the chain carries Phosphothreonine. Serine 623 is modified (phosphoserine).

The protein belongs to the SLC34A transporter family. In terms of assembly, interacts via its C-terminal region with NHERF4. Interacts with NHERF1. Interacts with TMEM174; regulates SLC34A1 internalization by PTH and FGF23. As to expression, kidney.

It is found in the apical cell membrane. Its subcellular location is the cell membrane. It carries out the reaction 3 Na(+)(out) + phosphate(out) = 3 Na(+)(in) + phosphate(in). Its activity is regulated as follows. Transport activity is significantly increased in response to dietary phosphate deprivation. Functionally, involved in actively transporting phosphate into cells via Na(+) cotransport in the renal brush border membrane. The cotransport has a Na(+):Pi stoichiometry of 3:1 and is electrogenic. The chain is Sodium-dependent phosphate transport protein 2A from Rattus norvegicus (Rat).